Reading from the N-terminus, the 812-residue chain is Valine--tRNA ligase (812 aa).

A 'HIGH' region motif is present at residues 46–56; the sequence is PTVSGQLHIGH. Positions 536–540 match the 'KMSKS' region motif; sequence KMSKS. An ATP-binding site is contributed by Lys-539.

This sequence belongs to the class-I aminoacyl-tRNA synthetase family. ValS type 2 subfamily. In terms of assembly, monomer.

It is found in the cytoplasm. It catalyses the reaction tRNA(Val) + L-valine + ATP = L-valyl-tRNA(Val) + AMP + diphosphate. Functionally, catalyzes the attachment of valine to tRNA(Val). As ValRS can inadvertently accommodate and process structurally similar amino acids such as threonine, to avoid such errors, it has a 'posttransfer' editing activity that hydrolyzes mischarged Thr-tRNA(Val) in a tRNA-dependent manner. This chain is Valine--tRNA ligase, found in Rickettsia rickettsii (strain Iowa).